The following is a 126-amino-acid chain: Aspartate 1-decarboxylase (126 aa).

The active-site Schiff-base intermediate with substrate; via pyruvic acid is the S25. The residue at position 25 (S25) is a Pyruvic acid (Ser). Residue T57 participates in substrate binding. Y58 (proton donor) is an active-site residue. G73 to A75 lines the substrate pocket.

This sequence belongs to the PanD family. In terms of assembly, heterooctamer of four alpha and four beta subunits. It depends on pyruvate as a cofactor. In terms of processing, is synthesized initially as an inactive proenzyme, which is activated by self-cleavage at a specific serine bond to produce a beta-subunit with a hydroxyl group at its C-terminus and an alpha-subunit with a pyruvoyl group at its N-terminus.

The protein resides in the cytoplasm. The enzyme catalyses L-aspartate + H(+) = beta-alanine + CO2. It participates in cofactor biosynthesis; (R)-pantothenate biosynthesis; beta-alanine from L-aspartate: step 1/1. Its function is as follows. Catalyzes the pyruvoyl-dependent decarboxylation of aspartate to produce beta-alanine. This Salmonella dublin (strain CT_02021853) protein is Aspartate 1-decarboxylase.